Reading from the N-terminus, the 326-residue chain is DNA-directed RNA polymerase subunit alpha (326 aa).

Residues 1 to 231 (MQTNLLKPKI…DQLVVFAALE (231 aa)) form an alpha N-terminal domain (alpha-NTD) region. The tract at residues 247-326 (VDPMLMRPVD…ESWPPANLEK (80 aa)) is alpha C-terminal domain (alpha-CTD).

It belongs to the RNA polymerase alpha chain family. As to quaternary structure, homodimer. The RNAP catalytic core consists of 2 alpha, 1 beta, 1 beta' and 1 omega subunit. When a sigma factor is associated with the core the holoenzyme is formed, which can initiate transcription.

The enzyme catalyses RNA(n) + a ribonucleoside 5'-triphosphate = RNA(n+1) + diphosphate. DNA-dependent RNA polymerase catalyzes the transcription of DNA into RNA using the four ribonucleoside triphosphates as substrates. In Polynucleobacter necessarius subsp. necessarius (strain STIR1), this protein is DNA-directed RNA polymerase subunit alpha.